The chain runs to 232 residues: Phosphatidylserine decarboxylase proenzyme (232 aa).

Ser-190 (schiff-base intermediate with substrate; via pyruvic acid) is an active-site residue. Ser-190 carries the pyruvic acid (Ser); by autocatalysis modification.

This sequence belongs to the phosphatidylserine decarboxylase family. PSD-A subfamily. Heterodimer of a large membrane-associated beta subunit and a small pyruvoyl-containing alpha subunit. It depends on pyruvate as a cofactor. Is synthesized initially as an inactive proenzyme. Formation of the active enzyme involves a self-maturation process in which the active site pyruvoyl group is generated from an internal serine residue via an autocatalytic post-translational modification. Two non-identical subunits are generated from the proenzyme in this reaction, and the pyruvate is formed at the N-terminus of the alpha chain, which is derived from the carboxyl end of the proenzyme. The post-translation cleavage follows an unusual pathway, termed non-hydrolytic serinolysis, in which the side chain hydroxyl group of the serine supplies its oxygen atom to form the C-terminus of the beta chain, while the remainder of the serine residue undergoes an oxidative deamination to produce ammonia and the pyruvoyl prosthetic group on the alpha chain.

It localises to the cell membrane. The catalysed reaction is a 1,2-diacyl-sn-glycero-3-phospho-L-serine + H(+) = a 1,2-diacyl-sn-glycero-3-phosphoethanolamine + CO2. The protein operates within phospholipid metabolism; phosphatidylethanolamine biosynthesis; phosphatidylethanolamine from CDP-diacylglycerol: step 2/2. In terms of biological role, catalyzes the formation of phosphatidylethanolamine (PtdEtn) from phosphatidylserine (PtdSer). The polypeptide is Phosphatidylserine decarboxylase proenzyme (Brucella canis (strain ATCC 23365 / NCTC 10854 / RM-666)).